A 421-amino-acid polypeptide reads, in one-letter code: Adenylosuccinate synthetase (421 aa).

Residues 11-17 (GDEGKGK) and 39-41 (GHT) each bind GTP. D12 (proton acceptor) is an active-site residue. 2 residues coordinate Mg(2+): D12 and G39. Residues 12–15 (DEGK), 37–40 (NAGH), T124, R138, Q220, T235, and R299 contribute to the IMP site. H40 (proton donor) is an active-site residue. Position 295 to 301 (295 to 301 (TTTGRPR)) interacts with substrate. GTP-binding positions include R301, 327 to 329 (KLD), and 409 to 411 (SVG).

It belongs to the adenylosuccinate synthetase family. Homodimer. The cofactor is Mg(2+).

It localises to the cytoplasm. The catalysed reaction is IMP + L-aspartate + GTP = N(6)-(1,2-dicarboxyethyl)-AMP + GDP + phosphate + 2 H(+). The protein operates within purine metabolism; AMP biosynthesis via de novo pathway; AMP from IMP: step 1/2. In terms of biological role, plays an important role in the de novo pathway of purine nucleotide biosynthesis. Catalyzes the first committed step in the biosynthesis of AMP from IMP. The sequence is that of Adenylosuccinate synthetase from Methanothrix thermoacetophila (strain DSM 6194 / JCM 14653 / NBRC 101360 / PT) (Methanosaeta thermophila).